Here is a 118-residue protein sequence, read N- to C-terminus: Large ribosomal subunit protein bL20 (118 aa).

It belongs to the bacterial ribosomal protein bL20 family.

Its function is as follows. Binds directly to 23S ribosomal RNA and is necessary for the in vitro assembly process of the 50S ribosomal subunit. It is not involved in the protein synthesizing functions of that subunit. The sequence is that of Large ribosomal subunit protein bL20 from Nostoc punctiforme (strain ATCC 29133 / PCC 73102).